A 324-amino-acid polypeptide reads, in one-letter code: Polyprenol dehydrogenase (324 aa).

Tyr206 acts as the Proton acceptor in catalysis. NAD(+)-binding residues include Tyr206, Lys210, and Thr243.

It belongs to the short-chain dehydrogenases/reductases (SDR) family.

The protein localises to the lipid droplet. It catalyses the reaction a di-trans,poly-cis-polyprenol + NAD(+) = a di-trans,poly-cis-polyprenal + NADH + H(+). The catalysed reaction is a di-trans,poly-cis-polyprenol + NADP(+) = a di-trans,poly-cis-polyprenal + NADPH + H(+). The enzyme catalyses a di-trans,poly-cis-dolichol + NADP(+) = a di-trans,poly-cis-dolichal + NADPH + H(+). It carries out the reaction a di-trans,poly-cis-dolichol + NAD(+) = a di-trans,poly-cis-dolichal + NADH + H(+). The protein operates within protein modification; protein glycosylation. In terms of biological role, oxidoreductase that plays a key role in early steps of protein N-linked glycosylation by mediating two non-consecutive steps in dolichol biosynthesis. Acts both as a NAD(+)-dependent dehydrogenase and as a NADPH-dependent reductase during the conversion of polyprenol into dolichol. First catalyzes the NAD(+)-dependent dehydrogenation of polyprenol into polyprenal; polyprenal is then reduced into dolichal by srd5a3. It then catalyzes the NADPH-dependent reduction of dolichal into dolichol. The polypeptide is Polyprenol dehydrogenase (Danio rerio (Zebrafish)).